The sequence spans 520 residues: UDP-N-acetylmuramoyl-L-alanyl-D-glutamate--2,6-diaminopimelate ligase (520 aa).

Leu-48 serves as a coordination point for UDP-N-acetyl-alpha-D-muramoyl-L-alanyl-D-glutamate. ATP is bound at residue 134 to 140 (GTSGKTT). UDP-N-acetyl-alpha-D-muramoyl-L-alanyl-D-glutamate-binding positions include 176-177 (TT), Ser-203, and Arg-211. Lys-243 carries the N6-carboxylysine modification. Residues Arg-405, 429-432 (DNPR), Gly-483, and Glu-487 each bind meso-2,6-diaminopimelate. Positions 429–432 (DNPR) match the Meso-diaminopimelate recognition motif motif.

It belongs to the MurCDEF family. MurE subfamily. It depends on Mg(2+) as a cofactor. In terms of processing, carboxylation is probably crucial for Mg(2+) binding and, consequently, for the gamma-phosphate positioning of ATP.

The protein localises to the cytoplasm. The catalysed reaction is UDP-N-acetyl-alpha-D-muramoyl-L-alanyl-D-glutamate + meso-2,6-diaminopimelate + ATP = UDP-N-acetyl-alpha-D-muramoyl-L-alanyl-gamma-D-glutamyl-meso-2,6-diaminopimelate + ADP + phosphate + H(+). It participates in cell wall biogenesis; peptidoglycan biosynthesis. Functionally, catalyzes the addition of meso-diaminopimelic acid to the nucleotide precursor UDP-N-acetylmuramoyl-L-alanyl-D-glutamate (UMAG) in the biosynthesis of bacterial cell-wall peptidoglycan. The protein is UDP-N-acetylmuramoyl-L-alanyl-D-glutamate--2,6-diaminopimelate ligase of Mycobacterium avium (strain 104).